A 169-amino-acid chain; its full sequence is Putative lipocalin R877 (169 aa).

The first 18 residues, 1-18 (MWIIILIVIIVIITIIFS), serve as a signal peptide directing secretion.

This sequence belongs to the calycin superfamily. Lipocalin family.

The protein localises to the secreted. It localises to the virion. Could play a role in the transport of a small ligand. The sequence is that of Putative lipocalin R877 from Acanthamoeba polyphaga mimivirus (APMV).